We begin with the raw amino-acid sequence, 312 residues long: Acetyl-coenzyme A carboxylase carboxyl transferase subunit alpha (312 aa).

The region spanning 36-286 is the CoA carboxyltransferase C-terminal domain; it reads NLEKEISKTY…ADYVKKSLNE (251 aa).

Belongs to the AccA family. In terms of assembly, acetyl-CoA carboxylase is a heterohexamer composed of biotin carboxyl carrier protein (AccB), biotin carboxylase (AccC) and two subunits each of ACCase subunit alpha (AccA) and ACCase subunit beta (AccD).

It is found in the cytoplasm. The catalysed reaction is N(6)-carboxybiotinyl-L-lysyl-[protein] + acetyl-CoA = N(6)-biotinyl-L-lysyl-[protein] + malonyl-CoA. The protein operates within lipid metabolism; malonyl-CoA biosynthesis; malonyl-CoA from acetyl-CoA: step 1/1. Functionally, component of the acetyl coenzyme A carboxylase (ACC) complex. First, biotin carboxylase catalyzes the carboxylation of biotin on its carrier protein (BCCP) and then the CO(2) group is transferred by the carboxyltransferase to acetyl-CoA to form malonyl-CoA. The protein is Acetyl-coenzyme A carboxylase carboxyl transferase subunit alpha of Campylobacter jejuni subsp. doylei (strain ATCC BAA-1458 / RM4099 / 269.97).